Reading from the N-terminus, the 459-residue chain is Hemopexin (459 aa).

A signal peptide spans M1–A23. 3 disulfides stabilise this stretch: C52–C232, C150–C155, and C189–C201. Hemopexin repeat units follow at residues G55–A95, P96–I140, P141–A185, and V186–C232. H81 contacts heme. H151 is a heme binding site. N-linked (GlcNAc...) asparagine glycosylation occurs at N188. An N-linked (GlcNAc...) asparagine glycan is attached at N218. H237 contributes to the heme binding site. N241 carries an N-linked (GlcNAc...) asparagine glycan. Intrachain disulfides connect C250–C453, C359–C401, and C411–C428. Hemopexin repeat units follow at residues P252–G297, P298–P345, L350–L389, and H393–A444. Residue H286 participates in heme binding.

The protein belongs to the hemopexin family.

Its subcellular location is the secreted. Binds heme and transports it to the liver for breakdown and iron recovery, after which the free hemopexin returns to the circulation. The sequence is that of Hemopexin (HPX) from Bos taurus (Bovine).